The chain runs to 140 residues: Profilin-1 (140 aa).

Alanine 2 bears the N-acetylalanine mark. A Phosphoserine modification is found at serine 28. Lysine 54 is covalently cross-linked (Glycyl lysine isopeptide (Lys-Gly) (interchain with G-Cter in SUMO2); alternate). Lysine 54 participates in a covalent cross-link: Glycyl lysine isopeptide (Lys-Gly) (interchain with G-Cter in ubiquitin); alternate. Phosphoserine is present on residues serine 57 and serine 85. Lysine 105 and lysine 108 each carry N6-acetyllysine. A Phosphotyrosine modification is found at tyrosine 129. Phosphoserine; by ROCK1 is present on serine 138.

This sequence belongs to the profilin family. In terms of assembly, found in a complex with XPO6, Ran, ACTB and PFN1. Interacts with ACTB. Interacts with VASP. Interacts with HTT. Interacts with SH3BGRL. Occurs in many kinds of cells as a complex with monomeric actin in a 1:1 ratio. Interacts with ACTMAP. Post-translationally, phosphorylation at Ser-138 reduces its affinity for G-actin and blocks its interaction with HTT, reducing its ability to inhibit androgen receptor (AR) and HTT aggregation. Expressed in epididymis (at protein level).

Its subcellular location is the cytoplasm. It localises to the cytoskeleton. Binds to actin and affects the structure of the cytoskeleton. At high concentrations, profilin prevents the polymerization of actin, whereas it enhances it at low concentrations. By binding to PIP2, it inhibits the formation of IP3 and DG. Inhibits androgen receptor (AR) and HTT aggregation and binding of G-actin is essential for its inhibition of AR. In Homo sapiens (Human), this protein is Profilin-1 (PFN1).